The primary structure comprises 400 residues: Probable cysteine desulfurase (400 aa).

Position 219 is an N6-(pyridoxal phosphate)lysine (Lys-219). Cys-358 (cysteine persulfide intermediate) is an active-site residue.

It belongs to the class-V pyridoxal-phosphate-dependent aminotransferase family. Csd subfamily. It depends on pyridoxal 5'-phosphate as a cofactor.

It carries out the reaction (sulfur carrier)-H + L-cysteine = (sulfur carrier)-SH + L-alanine. Catalyzes the removal of elemental sulfur and selenium atoms from L-cysteine, L-cystine, L-selenocysteine, and L-selenocystine to produce L-alanine. In Chlamydia muridarum (strain MoPn / Nigg), this protein is Probable cysteine desulfurase (csd).